A 430-amino-acid polypeptide reads, in one-letter code: Adenylosuccinate synthetase (430 aa).

GTP is bound by residues 12–18 and 40–42; these read GDEGKGK and GHT. Residue Asp13 is the Proton acceptor of the active site. 2 residues coordinate Mg(2+): Asp13 and Gly40. IMP is bound by residues 13 to 16, 38 to 41, Thr130, Arg144, Gln224, Thr239, and Arg303; these read DEGK and NAGH. His41 functions as the Proton donor in the catalytic mechanism. 299 to 305 is a substrate binding site; the sequence is TTTGRKR. Residues Arg305, 331–333, and 413–415 contribute to the GTP site; these read KLD and STS.

The protein belongs to the adenylosuccinate synthetase family. As to quaternary structure, homodimer. It depends on Mg(2+) as a cofactor.

It localises to the cytoplasm. The catalysed reaction is IMP + L-aspartate + GTP = N(6)-(1,2-dicarboxyethyl)-AMP + GDP + phosphate + 2 H(+). Its pathway is purine metabolism; AMP biosynthesis via de novo pathway; AMP from IMP: step 1/2. Functionally, plays an important role in the de novo pathway of purine nucleotide biosynthesis. Catalyzes the first committed step in the biosynthesis of AMP from IMP. This is Adenylosuccinate synthetase from Ruegeria pomeroyi (strain ATCC 700808 / DSM 15171 / DSS-3) (Silicibacter pomeroyi).